The primary structure comprises 233 residues: V-type proton ATPase subunit E (233 aa).

This sequence belongs to the V-ATPase E subunit family. As to quaternary structure, V-ATPase is a heteromultimeric enzyme composed of a peripheral catalytic V1 complex (components A to H) attached to an integral membrane V0 proton pore complex (components: a, c, c', c'' and d).

In terms of biological role, subunit of the peripheral V1 complex of vacuolar ATPase essential for assembly or catalytic function. V-ATPase is responsible for acidifying a variety of intracellular compartments in eukaryotic cells. The chain is V-type proton ATPase subunit E (vatE) from Dictyostelium discoideum (Social amoeba).